Consider the following 87-residue polypeptide: Putative RNase MJ1548 (87 aa).

Residues Arg-65 and His-70 contribute to the active site. Residues 65 to 72 (RNAIVHKY) carry the RX(4)HXY motif motif. Tyr-72 is subject to O-di-AMP-tyrosine.

The protein belongs to the HepT RNase toxin family. In terms of assembly, homodimer, probably forms a complex with cognate antitoxin MJ1547. Post-translationally, modified by cognate antitoxin MJ1547; probably at least 2 successive AMPylation events occur on Tyr-72.

Its function is as follows. Probable toxic component of a putative type VII toxin-antitoxin (TA) system, probably an RNase. Probably neutralized by cognate antitoxin MJ1547. Neutralization may be due to AMPylation by antitoxin MJ1547. This Methanocaldococcus jannaschii (strain ATCC 43067 / DSM 2661 / JAL-1 / JCM 10045 / NBRC 100440) (Methanococcus jannaschii) protein is Putative RNase MJ1548.